The sequence spans 350 residues: 3-isopropylmalate dehydrogenase (350 aa).

Residue 76–87 participates in NAD(+) binding; it reads GPKWDNAPKRPE. Substrate contacts are provided by Arg-94, Arg-104, Arg-132, and Asp-217. The Mg(2+) site is built by Asp-217, Asp-241, and Asp-245. 275 to 287 contacts NAD(+); it reads GSAPDIANQNIAN.

This sequence belongs to the isocitrate and isopropylmalate dehydrogenases family. LeuB type 1 subfamily. Homodimer. Mg(2+) is required as a cofactor. It depends on Mn(2+) as a cofactor.

The protein resides in the cytoplasm. It carries out the reaction (2R,3S)-3-isopropylmalate + NAD(+) = 4-methyl-2-oxopentanoate + CO2 + NADH. The protein operates within amino-acid biosynthesis; L-leucine biosynthesis; L-leucine from 3-methyl-2-oxobutanoate: step 3/4. In terms of biological role, catalyzes the oxidation of 3-carboxy-2-hydroxy-4-methylpentanoate (3-isopropylmalate) to 3-carboxy-4-methyl-2-oxopentanoate. The product decarboxylates to 4-methyl-2 oxopentanoate. The polypeptide is 3-isopropylmalate dehydrogenase (Listeria monocytogenes serovar 1/2a (strain ATCC BAA-679 / EGD-e)).